The following is a 106-amino-acid chain: MQFTIAVALLCCAIASTLAYPMPDDMTMKPTPPPQYPLNLQGGGGGQSGDGFGFAVQGHQKVWTSDNGRHEIGLNGGYGQHLGGPYGNSEPSWKVGSTYTYRFPNF.

The first 19 residues, 1–19 (MQFTIAVALLCCAIASTLA), serve as a signal peptide directing secretion. Residues 20-23 (YPMP) constitute a propeptide, removed by a dipeptidylpeptidase.

Belongs to the attacin/sarcotoxin-2 family.

It is found in the secreted. Functionally, antimicrobial peptide required to resist Gram-negative bacterial infections, regulated by Dredd. This chain is Diptericin A, found in Drosophila melanogaster (Fruit fly).